The sequence spans 145 residues: Succinate dehydrogenase assembly factor 2, mitochondrial (145 aa).

The protein belongs to the SDHAF2 family. In terms of assembly, interacts with the flavoprotein subunit within the SDH catalytic dimer.

It is found in the mitochondrion matrix. Plays an essential role in the assembly of succinate dehydrogenase (SDH), an enzyme complex (also referred to as respiratory complex II) that is a component of both the tricarboxylic acid (TCA) cycle and the mitochondrial electron transport chain, and which couples the oxidation of succinate to fumarate with the reduction of ubiquinone (coenzyme Q) to ubiquinol. Required for flavinylation (covalent attachment of FAD) of the flavoprotein subunit of the SDH catalytic dimer. The protein is Succinate dehydrogenase assembly factor 2, mitochondrial of Yarrowia lipolytica (strain CLIB 122 / E 150) (Yeast).